The sequence spans 21 residues: Conchiolin protein p20 (21 aa).

The segment covering 1 to 14 (YQRXSRYYYYXGPP) has biased composition (low complexity). The segment at 1–21 (YQRXSRYYYYXGPPDDIDDRY) is disordered.

Belongs to the N16 matrix protein family. In terms of assembly, homooligomer; disulfide-linked. May also be disulfide-linked to insoluble organic matrix. In terms of processing, according to PubMed:11250534, amino acids 4 and 11 may be sulfated or phosphorylated. By similarity with the N14 matrix protein, amino-acid 4 may be a cysteine involved in a disulfide bond. In terms of tissue distribution, component of conchiolin, the organic matrix of nacre. Is dispersed in calcium carbonate and also linked by disulfide bonds to the organic core of nacre.

The protein localises to the secreted. It localises to the extracellular space. Its subcellular location is the extracellular matrix. In terms of biological role, may be specifically involved in the formation of the nacreous layer. In Pinctada maxima (Silver-lipped pearl oyster), this protein is Conchiolin protein p20.